Consider the following 683-residue polypeptide: Bifunctional lysine-specific demethylase and histidyl-hydroxylase NO66 (683 aa).

Over residues 1–26 the composition is skewed to polar residues; it reads MHKASTSSANRANFQGNHKTQKSPNN. Disordered stretches follow at residues 1–162 and 179–208; these read MHKA…SPIQ and AAGA…AAKS. The span at 54 to 65 shows a compositional bias: basic and acidic residues; it reads LTKEQKERRKMM. Over residues 85–94 the composition is skewed to polar residues; the sequence is IDTSASTSNK. The span at 95 to 108 shows a compositional bias: basic residues; the sequence is GKSKAARPTDRKRR. Positions 116 to 125 are enriched in low complexity; sequence PADANNNNTK. Ser152 carries the phosphoserine modification. Thr158 is subject to Phosphothreonine. Ser159 carries the post-translational modification Phosphoserine. Positions 179-189 are enriched in low complexity; sequence AAGASGASGPA. The JmjC domain maps to 341 to 480; sequence NPSTYLVGLR…NLLEKLMPIV (140 aa). Residues His381, Asp383, and His446 each coordinate Fe cation.

The protein belongs to the ROX family. NO66 subfamily. Requires Fe(2+) as cofactor.

It is found in the nucleus. It carries out the reaction N(6),N(6)-dimethyl-L-lysyl(36)-[histone H3] + 2 2-oxoglutarate + 2 O2 = L-lysyl(36)-[histone H3] + 2 formaldehyde + 2 succinate + 2 CO2. In terms of biological role, oxygenase that can act as both a histone lysine demethylase and a ribosomal histidine hydroxylase. Specifically demethylates 'Lys-4' (H3K4me) and 'Lys-36' (H3K36me) of histone H3, thereby playing a central role in histone code. The sequence is that of Bifunctional lysine-specific demethylase and histidyl-hydroxylase NO66 from Drosophila yakuba (Fruit fly).